A 388-amino-acid polypeptide reads, in one-letter code: Galactokinase (388 aa).

Residue 33–36 coordinates substrate; that stretch reads EHTD. ATP contacts are provided by residues Ser-67 and 124–130; that span reads GAGLSSS. Positions 130 and 162 each coordinate Mg(2+). Asp-174 (proton acceptor) is an active-site residue. Residue Tyr-224 coordinates substrate.

Belongs to the GHMP kinase family. GalK subfamily.

The protein resides in the cytoplasm. It catalyses the reaction alpha-D-galactose + ATP = alpha-D-galactose 1-phosphate + ADP + H(+). It functions in the pathway carbohydrate metabolism; galactose metabolism. Catalyzes the transfer of the gamma-phosphate of ATP to D-galactose to form alpha-D-galactose-1-phosphate (Gal-1-P). The sequence is that of Galactokinase from Lacticaseibacillus paracasei (strain ATCC 334 / BCRC 17002 / CCUG 31169 / CIP 107868 / KCTC 3260 / NRRL B-441) (Lactobacillus paracasei).